A 269-amino-acid polypeptide reads, in one-letter code: MRSVPGPSPPCTRSLAHSCRAAARGPCGSARPRARSVSARAHSSEASDMARVQQNFNSAGVGLFFSLFGGNQSLALPHLAAPDIRHVDWRALKAAGFKGLVFDKDNTLSLPFALEVEPRLQPALAGCLEAFGGRAVLYSNSAGLQQYDPEGKEAAALEAALGIPVLRHADKKPGGGCAELEAHFGCPAPQLIMVGDRYLTDIAFGNRHGMLTVHVQPLTTSGEPFGVVMARRIEEFWVARWTSFGVHPPAHSLAPHDTLAAYVKDQPIA.

A chloroplast-targeting transit peptide spans 1 to 33 (MRSVPGPSPPCTRSLAHSCRAAARGPCGSARPR). Residues 25–46 (GPCGSARPRARSVSARAHSSEA) are disordered. Positions 29 to 46 (SARPRARSVSARAHSSEA) are enriched in low complexity. The short motif at 103-107 (DKDNT) is the Phosphoryl acceptor element.

It belongs to the HAD-like hydrolase superfamily.

It is found in the plastid. The protein localises to the chloroplast. It catalyses the reaction a 1,2-diacyl-sn-glycero-3-phospho-(1'-sn-glycero-3'-phosphate) + H2O = a 1,2-diacyl-sn-glycero-3-phospho-(1'-sn-glycerol) + phosphate. The protein operates within phospholipid metabolism; phosphatidylglycerol biosynthesis; phosphatidylglycerol from CDP-diacylglycerol: step 2/2. Functionally, phosphatidylglycerophosphate phosphatase involved in the biosynthesis of phosphatidylglycerol (PG), a phosphoglycerolipid predominantly present in chloroplastic thylakoid membranes and which has important photosynthetic function. Required for thylakoid membranes development and chloroplast function. The protein is Phosphatidylglycerophosphate phosphatase 1, chloroplastic of Chlamydomonas reinhardtii (Chlamydomonas smithii).